The primary structure comprises 262 residues: DNA-directed RNA polymerase subunit Rpo3 (262 aa).

It belongs to the archaeal Rpo3/eukaryotic RPB3 RNA polymerase subunit family. Part of the RNA polymerase complex.

The protein localises to the cytoplasm. The enzyme catalyses RNA(n) + a ribonucleoside 5'-triphosphate = RNA(n+1) + diphosphate. Its function is as follows. DNA-dependent RNA polymerase (RNAP) catalyzes the transcription of DNA into RNA using the four ribonucleoside triphosphates as substrates. This chain is DNA-directed RNA polymerase subunit Rpo3, found in Pyrobaculum neutrophilum (strain DSM 2338 / JCM 9278 / NBRC 100436 / V24Sta) (Thermoproteus neutrophilus).